We begin with the raw amino-acid sequence, 310 residues long: MAKIVVALGGNALGKSPQEQLELVKNTAKSLVGLITKGHEIVISHGNGPQVGSINLGLNYAAEHDQGPAFPFAECGAMSQAYIGYQLQESLQNELHSMGIDKQVVTLVTQVEVDEGDPAFNSPSKPIGLFYTKEEANRIQQEKGYQFVEDAGRGYRRVVPSPQPISIIELESIKTLVENDTLVIAAGGGGIPVIREQHDSFKGIDAVIDKDKTSALLGADIHCDQLIILTAIDYVYINYHTDQQQALKTTNIDTLKTYIEEEQFAKGSMLPKIESAISFIENNPNGSVLITSLNQLDAALEGKIGTLITK.

The protein belongs to the carbamate kinase family.

The protein resides in the cytoplasm. The enzyme catalyses hydrogencarbonate + NH4(+) + ATP = carbamoyl phosphate + ADP + H2O + H(+). Its pathway is metabolic intermediate metabolism; carbamoyl phosphate degradation; CO(2) and NH(3) from carbamoyl phosphate: step 1/1. This chain is Carbamate kinase (arcC), found in Staphylococcus epidermidis (strain ATCC 35984 / DSM 28319 / BCRC 17069 / CCUG 31568 / BM 3577 / RP62A).